Consider the following 184-residue polypeptide: Lipid A acyltransferase PagP (184 aa).

The signal sequence occupies residues 1-22 (MNIRHGIIAMSSTMLVPLAAEA). Catalysis depends on residues H57, D100, and S101.

Belongs to the lipid A palmitoyltransferase family. As to quaternary structure, homodimer.

The protein localises to the cell outer membrane. It carries out the reaction a lipid A + a 1,2-diacyl-sn-glycero-3-phosphocholine = a hepta-acyl lipid A + a 2-acyl-sn-glycero-3-phosphocholine. The catalysed reaction is a lipid IVA + a 1,2-diacyl-sn-glycero-3-phosphocholine = a lipid IVB + a 2-acyl-sn-glycero-3-phosphocholine. It catalyses the reaction a lipid IIA + a 1,2-diacyl-sn-glycero-3-phosphocholine = a lipid IIB + a 2-acyl-sn-glycero-3-phosphocholine. Its function is as follows. Transfers a fatty acid residue from the sn-1 position of a phospholipid to the N-linked hydroxyfatty acid chain on the proximal unit of lipid A or its precursors. This is Lipid A acyltransferase PagP from Methylobacillus flagellatus (strain ATCC 51484 / DSM 6875 / VKM B-1610 / KT).